The sequence spans 524 residues: GMP synthase [glutamine-hydrolyzing] (524 aa).

The Glutamine amidotransferase type-1 domain occupies 12 to 201 (TILVLDFGSQ…AVDICKASQS (190 aa)). The Nucleophile role is filled by C88. Active-site residues include H175 and E177. Residues 202 to 399 (WNMENFIDTE…LGISHELVWR (198 aa)) enclose the GMPS ATP-PPase domain. 230 to 236 (SGGVDST) contributes to the ATP binding site. Residues R303, D461, K516, and E522 each coordinate XMP.

In terms of assembly, homodimer. Requires Mg(2+) as cofactor.

The protein localises to the cytoplasm. It is found in the cytosol. The catalysed reaction is XMP + L-glutamine + ATP + H2O = GMP + L-glutamate + AMP + diphosphate + 2 H(+). It functions in the pathway purine metabolism; GMP biosynthesis; GMP from XMP (L-Gln route): step 1/1. Functionally, catalyzes the conversion of xanthine monophosphate (XMP) to GMP in the presence of glutamine and ATP through an adenyl-XMP intermediate. The protein is GMP synthase [glutamine-hydrolyzing] (GUA1) of Kluyveromyces lactis (strain ATCC 8585 / CBS 2359 / DSM 70799 / NBRC 1267 / NRRL Y-1140 / WM37) (Yeast).